A 108-amino-acid chain; its full sequence is Nucleoid-associated protein PSHAa1202 (108 aa).

2 disordered regions span residues Met1–Met20 and Thr87–Phe108.

It belongs to the YbaB/EbfC family. In terms of assembly, homodimer.

The protein localises to the cytoplasm. It is found in the nucleoid. Its function is as follows. Binds to DNA and alters its conformation. May be involved in regulation of gene expression, nucleoid organization and DNA protection. This chain is Nucleoid-associated protein PSHAa1202, found in Pseudoalteromonas translucida (strain TAC 125).